The following is a 118-amino-acid chain: MARIAGVNLPAQKHVWVGLQSIYGIGRTRSKKLCESAGVTSTTKIRDLSEPEIERLRAEVGKYVVEGDLRREIGIAIKRLMDLGCYRGLRHRRGHPLRGQRTRTNARTRKGPRKAIRK.

The interval 92–118 (RRGHPLRGQRTRTNARTRKGPRKAIRK) is disordered.

Belongs to the universal ribosomal protein uS13 family. As to quaternary structure, part of the 30S ribosomal subunit. Forms a loose heterodimer with protein S19. Forms two bridges to the 50S subunit in the 70S ribosome.

Functionally, located at the top of the head of the 30S subunit, it contacts several helices of the 16S rRNA. In the 70S ribosome it contacts the 23S rRNA (bridge B1a) and protein L5 of the 50S subunit (bridge B1b), connecting the 2 subunits; these bridges are implicated in subunit movement. Contacts the tRNAs in the A and P-sites. The polypeptide is Small ribosomal subunit protein uS13 (Xanthomonas campestris pv. campestris (strain ATCC 33913 / DSM 3586 / NCPPB 528 / LMG 568 / P 25)).